A 484-amino-acid chain; its full sequence is tRNA sulfurtransferase (484 aa).

One can recognise a THUMP domain in the interval 61–165 (TLLVELLGRI…NDKMMLIKAR (105 aa)). ATP is bound by residues 183-184 (LI), Lys265, Gly287, and Gln296. The cysteines at positions 344 and 456 are disulfide-linked. The Rhodanese domain occupies 404–484 (LSANEVILDI…DNVKVLNKIS (81 aa)). Cys456 functions as the Cysteine persulfide intermediate in the catalytic mechanism.

It belongs to the ThiI family.

Its subcellular location is the cytoplasm. The enzyme catalyses [ThiI sulfur-carrier protein]-S-sulfanyl-L-cysteine + a uridine in tRNA + 2 reduced [2Fe-2S]-[ferredoxin] + ATP + H(+) = [ThiI sulfur-carrier protein]-L-cysteine + a 4-thiouridine in tRNA + 2 oxidized [2Fe-2S]-[ferredoxin] + AMP + diphosphate. The catalysed reaction is [ThiS sulfur-carrier protein]-C-terminal Gly-Gly-AMP + S-sulfanyl-L-cysteinyl-[cysteine desulfurase] + AH2 = [ThiS sulfur-carrier protein]-C-terminal-Gly-aminoethanethioate + L-cysteinyl-[cysteine desulfurase] + A + AMP + 2 H(+). It participates in cofactor biosynthesis; thiamine diphosphate biosynthesis. Catalyzes the ATP-dependent transfer of a sulfur to tRNA to produce 4-thiouridine in position 8 of tRNAs, which functions as a near-UV photosensor. Also catalyzes the transfer of sulfur to the sulfur carrier protein ThiS, forming ThiS-thiocarboxylate. This is a step in the synthesis of thiazole, in the thiamine biosynthesis pathway. The sulfur is donated as persulfide by IscS. The sequence is that of tRNA sulfurtransferase from Histophilus somni (strain 2336) (Haemophilus somnus).